Reading from the N-terminus, the 161-residue chain is Endoribonuclease YbeY (161 aa).

Zn(2+) contacts are provided by His121, His125, and His131.

Belongs to the endoribonuclease YbeY family. It depends on Zn(2+) as a cofactor.

The protein resides in the cytoplasm. Functionally, single strand-specific metallo-endoribonuclease involved in late-stage 70S ribosome quality control and in maturation of the 3' terminus of the 16S rRNA. The chain is Endoribonuclease YbeY from Stenotrophomonas maltophilia (strain K279a).